A 377-amino-acid polypeptide reads, in one-letter code: Alanine racemase (377 aa).

Residue lysine 39 is the Proton acceptor; specific for D-alanine of the active site. Lysine 39 bears the N6-(pyridoxal phosphate)lysine mark. Arginine 137 contributes to the substrate binding site. Tyrosine 266 acts as the Proton acceptor; specific for L-alanine in catalysis. Residue methionine 314 coordinates substrate.

The protein belongs to the alanine racemase family. Pyridoxal 5'-phosphate serves as cofactor.

It catalyses the reaction L-alanine = D-alanine. The protein operates within amino-acid biosynthesis; D-alanine biosynthesis; D-alanine from L-alanine: step 1/1. In terms of biological role, catalyzes the interconversion of L-alanine and D-alanine. May also act on other amino acids. This is Alanine racemase (alr) from Symbiobacterium thermophilum (strain DSM 24528 / JCM 14929 / IAM 14863 / T).